The primary structure comprises 193 residues: NADPH:quinone oxidoreductase MdaB (193 aa).

Residues 16-23, 69-72, Y108, and 124-127 each bind FAD; these read SNGQLNDT, GWWM, and TWNA.

Belongs to the oxidoreductase MdaB family. In terms of assembly, homodimer. It depends on FAD as a cofactor.

It is found in the cytoplasm. It catalyses the reaction a quinone + NADPH + H(+) = a quinol + NADP(+). In terms of biological role, NADPH-specific quinone reductase. The sequence is that of NADPH:quinone oxidoreductase MdaB from Escherichia coli O157:H7.